A 640-amino-acid chain; its full sequence is Threonine--tRNA ligase (640 aa).

Residues 1–61 (MPIITLPNGD…TEDSTLQIIT (61 aa)) enclose the TGS domain. Residues 242–533 (DHRKIGKALD…LIEHYAGFMP (292 aa)) form a catalytic region. 3 residues coordinate Zn(2+): Cys333, His384, and His510.

The protein belongs to the class-II aminoacyl-tRNA synthetase family. Homodimer. Zn(2+) is required as a cofactor.

The protein resides in the cytoplasm. The enzyme catalyses tRNA(Thr) + L-threonine + ATP = L-threonyl-tRNA(Thr) + AMP + diphosphate + H(+). In terms of biological role, catalyzes the attachment of threonine to tRNA(Thr) in a two-step reaction: L-threonine is first activated by ATP to form Thr-AMP and then transferred to the acceptor end of tRNA(Thr). Also edits incorrectly charged L-seryl-tRNA(Thr). This is Threonine--tRNA ligase from Acinetobacter baumannii (strain SDF).